The following is a 95-amino-acid chain: Large ribosomal subunit protein eL43 (95 aa).

Residues Cys38–Cys59 form a C4-type zinc finger.

It belongs to the eukaryotic ribosomal protein eL43 family. It depends on Zn(2+) as a cofactor.

The polypeptide is Large ribosomal subunit protein eL43 (Halobacterium salinarum (strain ATCC 29341 / DSM 671 / R1)).